Here is a 135-residue protein sequence, read N- to C-terminus: Large ribosomal subunit protein uL16c (135 aa).

Belongs to the universal ribosomal protein uL16 family. Part of the 50S ribosomal subunit.

It localises to the plastid. The protein resides in the chloroplast. This is Large ribosomal subunit protein uL16c from Cucumis sativus (Cucumber).